A 360-amino-acid chain; its full sequence is Phosphoserine aminotransferase (360 aa).

Residue R41 coordinates L-glutamate. Residues W101, T152, D172, and Q195 each coordinate pyridoxal 5'-phosphate. K196 bears the N6-(pyridoxal phosphate)lysine mark. N237 to T238 serves as a coordination point for pyridoxal 5'-phosphate.

This sequence belongs to the class-V pyridoxal-phosphate-dependent aminotransferase family. SerC subfamily. In terms of assembly, homodimer. It depends on pyridoxal 5'-phosphate as a cofactor.

The protein resides in the cytoplasm. The catalysed reaction is O-phospho-L-serine + 2-oxoglutarate = 3-phosphooxypyruvate + L-glutamate. The enzyme catalyses 4-(phosphooxy)-L-threonine + 2-oxoglutarate = (R)-3-hydroxy-2-oxo-4-phosphooxybutanoate + L-glutamate. It participates in amino-acid biosynthesis; L-serine biosynthesis; L-serine from 3-phospho-D-glycerate: step 2/3. Its pathway is cofactor biosynthesis; pyridoxine 5'-phosphate biosynthesis; pyridoxine 5'-phosphate from D-erythrose 4-phosphate: step 3/5. Its function is as follows. Catalyzes the reversible conversion of 3-phosphohydroxypyruvate to phosphoserine and of 3-hydroxy-2-oxo-4-phosphonooxybutanoate to phosphohydroxythreonine. The protein is Phosphoserine aminotransferase of Burkholderia cenocepacia (strain ATCC BAA-245 / DSM 16553 / LMG 16656 / NCTC 13227 / J2315 / CF5610) (Burkholderia cepacia (strain J2315)).